Here is a 119-residue protein sequence, read N- to C-terminus: Large ribosomal subunit protein bL20 (119 aa).

This sequence belongs to the bacterial ribosomal protein bL20 family.

Binds directly to 23S ribosomal RNA and is necessary for the in vitro assembly process of the 50S ribosomal subunit. It is not involved in the protein synthesizing functions of that subunit. In Levilactobacillus brevis (strain ATCC 367 / BCRC 12310 / CIP 105137 / JCM 1170 / LMG 11437 / NCIMB 947 / NCTC 947) (Lactobacillus brevis), this protein is Large ribosomal subunit protein bL20.